Consider the following 184-residue polypeptide: Isopentenyl-diphosphate Delta-isomerase (184 aa).

Positions 26 and 33 each coordinate Mn(2+). The 135-residue stretch at P31–L165 folds into the Nudix hydrolase domain. C68 is a catalytic residue. H70 provides a ligand contact to Mn(2+). Residue E88 coordinates Mg(2+). 2 residues coordinate Mn(2+): E115 and E117. E117 is an active-site residue.

It belongs to the IPP isomerase type 1 family. Mg(2+) is required as a cofactor. Requires Mn(2+) as cofactor.

The protein resides in the cytoplasm. The enzyme catalyses isopentenyl diphosphate = dimethylallyl diphosphate. It functions in the pathway isoprenoid biosynthesis; dimethylallyl diphosphate biosynthesis; dimethylallyl diphosphate from isopentenyl diphosphate: step 1/1. Its function is as follows. Catalyzes the 1,3-allylic rearrangement of the homoallylic substrate isopentenyl (IPP) to its highly electrophilic allylic isomer, dimethylallyl diphosphate (DMAPP). This Paenarthrobacter aurescens (strain TC1) protein is Isopentenyl-diphosphate Delta-isomerase.